The primary structure comprises 29 residues: U20-ctenitoxin-Co1a (29 aa).

2 disulfides stabilise this stretch: cysteine 3–cysteine 16 and cysteine 10–cysteine 21.

In terms of tissue distribution, expressed by the venom gland.

The protein localises to the secreted. This Ctenus ornatus (Brazilian spider) protein is U20-ctenitoxin-Co1a.